The following is a 307-amino-acid chain: tRNA pseudouridine synthase B (307 aa).

Residue D39 is the Nucleophile of the active site.

The protein belongs to the pseudouridine synthase TruB family. Type 1 subfamily.

It carries out the reaction uridine(55) in tRNA = pseudouridine(55) in tRNA. Its function is as follows. Responsible for synthesis of pseudouridine from uracil-55 in the psi GC loop of transfer RNAs. This Lactiplantibacillus plantarum (strain ATCC BAA-793 / NCIMB 8826 / WCFS1) (Lactobacillus plantarum) protein is tRNA pseudouridine synthase B.